The primary structure comprises 479 residues: Endosomal/lysosomal proton channel TMEM175 (479 aa).

The interval 1-26 (MSGPQAPEPTLEGQADASAGSPDEDA) is disordered. The Cytoplasmic segment spans residues 1 to 33 (MSGPQAPEPTLEGQADASAGSPDEDAAEGIQHS). The helical transmembrane segment at 34–56 (HRMLSFSDALLSIIATVMEFDKS) threads the bilayer. A RxxxFSD motif 1 motif is present at residues 35 to 41 (RMLSFSD). Positions 52 to 58 (EFDKSVQ) are short helix H2-1. The Lumenal portion of the chain corresponds to 57–64 (VQRLLATR). A helical membrane pass occupies residues 65 to 87 (IAVYLMTFLIVTVAWAAHTRLFQ). Residues 88-93 (VVGKID) are Cytoplasmic-facing. A helical membrane pass occupies residues 94-103 (DTLALLNLFS). Residues 104–113 (LMVTFPEVPL) lie on the Lumenal side of the membrane. Residues 114 to 135 (GIFLFCMCVIAIGAVQALIVLY) form a helical membrane-spanning segment. Residues 136-159 (AFHFPHLLSPQIERSAHRGLYRQR) are Cytoplasmic-facing. A helical transmembrane segment spans residues 160–180 (VLGIIVRGPALCLAAAGFSLF). The Lumenal segment spans residues 181–185 (FYPAS). Residues 186-205 (YLLMAMVIVLPHVSKAAGWC) form a helical membrane-spanning segment. At 206 to 232 (RAQLVGPREPPAHSVEVFTFDLHEPLS) the chain is on the cytoplasmic side. Residues 233-257 (KERVEAFSDGVYAIVATLLILDICE) traverse the membrane as a helical segment. Positions 235–241 (RVEAFSD) match the RxxxFSD motif 2 motif. Residues 258–284 (DNVPDAKDVKEKFQGSLVAALGESGPH) lie on the Lumenal side of the membrane. The short helix H1-2 stretch occupies residues 263 to 271 (AKDVKEKFQ). The short helix H2-2 stretch occupies residues 273 to 279 (SLVAALG). The helical transmembrane segment at 285–307 (FLAYFGSFATVGLLWFAHHSLFL) threads the bilayer. Topologically, residues 308 to 313 (HIRRAT) are cytoplasmic. Residues 314 to 335 (QPMGLLNTLSLAFVGGLPLAYQ) form a helical membrane-spanning segment. At 336–350 (QTSAFTKQPRDELES) the chain is on the lumenal side. The helical transmembrane segment at 351-371 (VRISCAIIFLASIFQFAIWTT) threads the bilayer. The Cytoplasmic portion of the chain corresponds to 372–391 (ALLQEGETLQPSARFGGREH). A helical transmembrane segment spans residues 392-415 (AFMFAKLALYPCASLLAFACTCVL). Over 416–417 (SS) the chain is Lumenal. A helical transmembrane segment spans residues 418 to 444 (FSTAIFHAMQIAVPFAFLLLRLLVRLA). Residues 445–479 (LAGLRALRGLVGPVLARPAPGAADEAQSPLLPAPC) are Cytoplasmic-facing.

It belongs to the TMEM175 family. Homodimer. Interacts with AKT (AKT1, AKT2 or AKT3); leading to formation of the lysoK(GF) complex, which activates the channel. Interacts with LAMP1; inhibiting the proton channel activity of TMEM175. Interacts with LAMP2; inhibiting the proton channel activity of TMEM175.

It localises to the endosome membrane. Its subcellular location is the lysosome membrane. It carries out the reaction H(+)(in) = H(+)(out). It catalyses the reaction K(+)(in) = K(+)(out). Its activity is regulated as follows. Active at low pH (under pH 4.6): proton channel activity is activated by luminal side protons. Polyunsaturated fatty acids, such as arachidonic acid, also activate the channel activity. Proton channel activity is directly inhibited by LAMP1 or LAMP2, facilitating lysosomal acidification. Channel activity is activated following interaction with AKT (AKT1, AKT2 or AKT3): interaction promotes activation from closed to an open state. Activation by AKT is independent of AKT serine/threonine-protein kinase activity. In terms of biological role, proton-activated proton channel that catalyzes proton efflux from endosomes and lysosomes to maintain a steady-state pH. Activated at low pH (under pH 4.6) by luminal side protons: selectively mediates lysosomal proton release from lysosomes, eliciting a proton leak that balances V-ATPase activity to maintain pH homeostasis. Regulation of lumenal pH stability is required for autophagosome-lysosome fusion. Also acts as a potassium channel at higher pH, regulating potassium conductance in endosomes and lysosomes. Constitutes the pore-forming subunit of the lysoK(GF) complex, a complex activated by extracellular growth factors. The lysoK(GF) complex is composed of TMEM175 and AKT (AKT1, AKT2 or AKT3), a major target of growth factor receptors: in the complex, TMEM175 channel is opened by conformational changes by AKT, leading to its activation. The lysoK(GF) complex is required to protect neurons against stress-induced damage. The sequence is that of Endosomal/lysosomal proton channel TMEM175 from Bos taurus (Bovine).